A 574-amino-acid chain; its full sequence is Pyruvate kinase PKLR (574 aa).

Residues Ser-2, Ser-19, Ser-26, and Ser-43 each carry the phosphoserine modification. A substrate-binding site is contributed by Arg-116. Residues Asn-118, Ser-120, Asp-156, and Thr-157 each contribute to the K(+) site. An ATP-binding site is contributed by 118-121; that stretch reads NFSH. The ATP site is built by Arg-163 and Lys-250. Phosphoserine is present on Ser-292. Lys-313 contacts substrate. Glu-315 contributes to the Mn(2+) binding site. Positions 338, 339, and 371 each coordinate substrate. Asp-339 provides a ligand contact to Mn(2+). Residues 475–480, Trp-525, Arg-532, and 559–564 each bind beta-D-fructose 1,6-bisphosphate; these read TKTGRS and RPGSGY.

Belongs to the pyruvate kinase family. As to quaternary structure, homotetramer. Requires Mg(2+) as cofactor. The cofactor is Mn(2+). K(+) serves as cofactor.

It catalyses the reaction pyruvate + ATP = phosphoenolpyruvate + ADP + H(+). Its pathway is carbohydrate degradation; glycolysis; pyruvate from D-glyceraldehyde 3-phosphate: step 5/5. With respect to regulation, allosterically activated by fructose 1,6-bisphosphate. Its function is as follows. Pyruvate kinase that catalyzes the conversion of phosphoenolpyruvate to pyruvate with the synthesis of ATP, and which plays a key role in glycolysis. This chain is Pyruvate kinase PKLR (Pklr), found in Rattus norvegicus (Rat).